The following is a 157-amino-acid chain: MHCPFCSATDTKVIDSRLVADGHQVRRRRECLLCHERFTTFEGAELVMPRVVKQDGSRQPFDEDKLRGGMLRAVEKRPVSMDEIEQALSKIKSTLRATGEREVTSKMIGNLMMDHLVNLDKVAYIRFASVYRAFEDVSEFGEAIAKLQNDKSKSGKS.

Residues 3–34 fold into a zinc finger; it reads CPFCSATDTKVIDSRLVADGHQVRRRRECLLC. The ATP-cone domain maps to 49-139; that stretch reads PRVVKQDGSR…VYRAFEDVSE (91 aa).

This sequence belongs to the NrdR family. The cofactor is Zn(2+).

Its function is as follows. Negatively regulates transcription of bacterial ribonucleotide reductase nrd genes and operons by binding to NrdR-boxes. This is Transcriptional repressor NrdR from Shewanella loihica (strain ATCC BAA-1088 / PV-4).